The sequence spans 286 residues: 4-diphosphocytidyl-2-C-methyl-D-erythritol kinase (286 aa).

The active site involves lysine 11. 94–104 contacts ATP; the sequence is PMGGGIGGGSS. Aspartate 136 is a catalytic residue.

It belongs to the GHMP kinase family. IspE subfamily.

It carries out the reaction 4-CDP-2-C-methyl-D-erythritol + ATP = 4-CDP-2-C-methyl-D-erythritol 2-phosphate + ADP + H(+). It participates in isoprenoid biosynthesis; isopentenyl diphosphate biosynthesis via DXP pathway; isopentenyl diphosphate from 1-deoxy-D-xylulose 5-phosphate: step 3/6. In terms of biological role, catalyzes the phosphorylation of the position 2 hydroxy group of 4-diphosphocytidyl-2C-methyl-D-erythritol. The sequence is that of 4-diphosphocytidyl-2-C-methyl-D-erythritol kinase from Pseudomonas putida (strain ATCC 700007 / DSM 6899 / JCM 31910 / BCRC 17059 / LMG 24140 / F1).